The sequence spans 252 residues: Putative pinene synthase (252 aa).

The protein belongs to the terpene synthase family. Tpsa subfamily.

The chain is Putative pinene synthase from Fragaria ananassa (Strawberry).